The primary structure comprises 665 residues: MDDGDLSFDFEGGLDQPPAGGGGGPAPHSSDPGGVGGGGGGGGPGDGGGHGRGRGRGSYRQTVCRHWLRGLCMKGEACGFLHQFDKARMPVCRFFRDFGECREPDCAYKHSYDDVKECNMYKMGFCPNGPNCRYKHVKLPGPPPPVEEVLQKILQIRSFNKFNQHRHNNYNQQGERPQHPQGSGLPNQNSIDNTTTTTAQPAVGQQAQTTNQQPPQQQQQQQQQQQQQQKPNTNDQVQSVPNGSSNQATRIATPLPQGPSRYFIVKSCNRENLEISVQQGIWATQRSNEAKLNEAFESIENVILIFSINRTRNFQGCAKMTSRIGGYIGGGNWKSAHGTAHYGRNFSIQWLKLCELSFQKTHHLRNPYNDNLPVKISRDCQELEPFIGEQLASLLYLEPDSELTAILIAAEAKKEEEKAKGVSADEAADNQDIVLFDDNEEEEEEESEEEEEGNGQESQGRGRGRGMMWPPQMPMLRGVGPMMGGRGFPPNMIGDGFGFGGGFGMPDPFGVPRGFPPFGPRFPGDFARGGPMPGMVFPGRPPQPGGMFPMGLEMMMGPGRGPLMGGLGMGGPGRPNRPVGMAPFMPPPPPPNNRGTKREQRRPGGERGDRYETTSDQGSRGHDATGNSGAEGARSQSGDRYGRSALRDDDSESDEEAAPRRSRKR.

Positions 1–55 (MDDGDLSFDFEGGLDQPPAGGGGGPAPHSSDPGGVGGGGGGGGPGDGGGHGRGRG) are disordered. Positions 33-50 (GGVGGGGGGGGPGDGGGH) are enriched in gly residues. 3 consecutive C3H1-type zinc fingers follow at residues 58–85 (SYRQ…HQFD), 86–113 (KARM…HSYD), and 114–139 (DVKE…HVKL). The disordered stretch occupies residues 167-256 (HNNYNQQGER…QATRIATPLP (90 aa)). Polar residues predominate over residues 169–200 (NYNQQGERPQHPQGSGLPNQNSIDNTTTTTAQ). A compositionally biased stretch (low complexity) spans 205–238 (QQAQTTNQQPPQQQQQQQQQQQQQQKPNTNDQVQ). Residues 239–250 (SVPNGSSNQATR) show a composition bias toward polar residues. The 136-residue stretch at 260 to 395 (SRYFIVKSCN…FIGEQLASLL (136 aa)) folds into the YTH domain. Residues 432–459 (DIVLFDDNEEEEEEESEEEEEGNGQESQ) are a coiled coil. Residues 439–454 (NEEEEEEESEEEEEGN) are compositionally biased toward acidic residues. Disordered stretches follow at residues 439–469 (NEEE…GMMW) and 561–665 (GPLM…SRKR). Residues 561 to 573 (GPLMGGLGMGGPG) show a composition bias toward gly residues. Residues 596-623 (TKREQRRPGGERGDRYETTSDQGSRGHD) are compositionally biased toward basic and acidic residues.

This Oryza sativa subsp. japonica (Rice) protein is Zinc finger CCCH domain-containing protein 45.